Reading from the N-terminus, the 153-residue chain is Arachidonate 5-lipoxygenase-activating protein (153 aa).

The Lumenal segment spans residues methionine 1–asparagine 8. The helical transmembrane segment at isoleucine 9–valine 30 threads the bilayer. At glutamate 31–arginine 52 the chain is on the cytoplasmic side. Residues valine 53 to phenylalanine 77 traverse the membrane as a helical segment. The Lumenal portion of the chain corresponds to cysteine 78–glutamine 80. A helical membrane pass occupies residues valine 81–leucine 102. Residues glycine 103–glutamine 107 lie on the Cytoplasmic side of the membrane. Residues serine 108–glycine 115 lie within the membrane without spanning it. A helical membrane pass occupies residues lysine 116 to alanine 128. Residues glycine 129–threonine 153 are Lumenal-facing.

The protein belongs to the MAPEG family. As to quaternary structure, homotrimer. Interacts with LTC4S and ALOX5.

The protein localises to the nucleus membrane. It is found in the endoplasmic reticulum membrane. Its function is as follows. Required for leukotriene biosynthesis by ALOX5 (5-lipoxygenase). Anchors ALOX5 to the membrane. Binds arachidonic acid, and could play an essential role in the transfer of arachidonic acid to ALOX5. Binds to MK-886, a compound that blocks the biosynthesis of leukotrienes. The polypeptide is Arachidonate 5-lipoxygenase-activating protein (ALOX5AP) (Sus scrofa (Pig)).